The sequence spans 319 residues: Ribonucleoside-diphosphate reductase small chain (319 aa).

Fe cation is bound by residues aspartate 70, glutamate 101, and histidine 104. The active site involves tyrosine 108. Positions 163, 197, and 200 each coordinate Fe cation. Residues 313-319 (FSLDVDF) form an interaction with R1 region.

It belongs to the ribonucleoside diphosphate reductase small chain family. Interacts with RNR1/OPG080 subunit. Can interact with host RNR1 supunit. Requires Fe cation as cofactor.

The enzyme catalyses a 2'-deoxyribonucleoside 5'-diphosphate + [thioredoxin]-disulfide + H2O = a ribonucleoside 5'-diphosphate + [thioredoxin]-dithiol. Functionally, ribonucleoside-diphosphate reductase holoenzyme provides the precursors necessary for viral DNA synthesis. Allows virus growth in non-dividing cells. Catalyzes the biosynthesis of deoxyribonucleotides from the corresponding ribonucleotides. The sequence is that of Ribonucleoside-diphosphate reductase small chain (OPG048) from Homo sapiens (Human).